The following is a 535-amino-acid chain: INSYN2B protein (535 aa).

Disordered regions lie at residues 23–85 (LVKQ…SFPR), 215–346 (EARE…RSSS), and 360–387 (KLPS…PRQE). The span at 46–59 (KNPTGVTEVNTQTP) shows a compositional bias: polar residues. The span at 219 to 232 (SALSPESSAEESNS) shows a compositional bias: low complexity. 3 stretches are compositionally biased toward polar residues: residues 258 to 269 (CSNTNSSASNMP), 307 to 319 (RTHS…SRSQ), and 361 to 375 (LPSQ…TGVG). The stretch at 411–448 (DLQGRLQSVEESLHSNQEKIKVLLNVIQDLEKAHALTE) forms a coiled coil. The segment at 493-528 (LEEAEPTEEAPSPPKSPAEAPVPEKQDLRRKSKKVK) is disordered.

This sequence belongs to the INSYN2 family.

In Mus musculus (Mouse), this protein is INSYN2B protein (Insyn2b).